The chain runs to 879 residues: Imidazolonepropionase (879 aa).

The interval 1 to 32 is disordered; that stretch reads MSCVQQAAQHRSKPRGNTRAIGMPPIAHHPAP. Residues 1-478 are unknown; the sequence is MSCVQQAAQH…YTYQTPRACA (478 aa). An imidazolonepropionase region spans residues 479 to 879; it reads MHCDVLWHNA…HARVLRGHLC (401 aa). Residues histidine 548 and histidine 550 each contribute to the Fe(3+) site. The Zn(2+) site is built by histidine 548 and histidine 550. The 4-imidazolone-5-propanoate site is built by arginine 557, tyrosine 620, and histidine 653. Tyrosine 620 provides a ligand contact to N-formimidoyl-L-glutamate. Histidine 716 lines the Fe(3+) pocket. Histidine 716 is a Zn(2+) binding site. Glutamine 719 is a binding site for 4-imidazolone-5-propanoate. Aspartate 791 provides a ligand contact to Fe(3+). Aspartate 791 is a Zn(2+) binding site. N-formimidoyl-L-glutamate contacts are provided by asparagine 793 and glycine 795. Threonine 796 provides a ligand contact to 4-imidazolone-5-propanoate.

It belongs to the metallo-dependent hydrolases superfamily. HutI family. It depends on Zn(2+) as a cofactor. The cofactor is Fe(3+).

Its subcellular location is the cytoplasm. It catalyses the reaction 4-imidazolone-5-propanoate + H2O = N-formimidoyl-L-glutamate. The protein operates within amino-acid degradation; L-histidine degradation into L-glutamate; N-formimidoyl-L-glutamate from L-histidine: step 3/3. Catalyzes the hydrolytic cleavage of the carbon-nitrogen bond in imidazolone-5-propanoate to yield N-formimidoyl-L-glutamate. It is the third step in the universal histidine degradation pathway. This Xanthomonas oryzae pv. oryzae (strain KACC10331 / KXO85) protein is Imidazolonepropionase (hutI).